Reading from the N-terminus, the 299-residue chain is Tyrosine recombinase XerD (299 aa).

In terms of domain architecture, Core-binding (CB) spans 3–88 (QQDNPLIEQF…AMRRLFQYLY (86 aa)). A Tyr recombinase domain is found at 109–293 (RLPKDLSEAQ…ATERLRQLHQ (185 aa)). Residues arginine 149, lysine 173, histidine 245, arginine 248, and histidine 271 contribute to the active site. The active-site O-(3'-phospho-DNA)-tyrosine intermediate is tyrosine 280.

This sequence belongs to the 'phage' integrase family. XerD subfamily. Forms a cyclic heterotetrameric complex composed of two molecules of XerC and two molecules of XerD, in which XerC interacts with XerD via its C-terminal region, XerD interacts with XerC via its C-terminal region and so on.

The protein resides in the cytoplasm. Its activity is regulated as follows. FtsK may regulate the catalytic switch between XerC and XerD in the heterotetrameric complex during the two steps of the recombination process. Site-specific tyrosine recombinase, which acts by catalyzing the cutting and rejoining of the recombining DNA molecules. Binds cooperatively to specific DNA consensus sequences that are separated from XerC binding sites by a short central region, forming the heterotetrameric XerC-XerD complex that recombines DNA substrates. The complex is essential to convert dimers of the bacterial chromosome into monomers to permit their segregation at cell division. It also contributes to the segregational stability of plasmids. In the complex XerD specifically exchanges the bottom DNA strands. This chain is Tyrosine recombinase XerD, found in Yersinia pestis.